Reading from the N-terminus, the 289-residue chain is Thioredoxin-like protein 1 (289 aa).

Residues 2–109 (VGVKPVGSDP…EEKIKQHLEN (108 aa)) enclose the Thioredoxin domain. The cysteines at positions 34 and 37 are disulfide-linked. Position 113 is a phosphoserine (serine 113). Residues 115–285 (EDTDIPKGYM…NDFKRVVGKK (171 aa)) enclose the PITH domain.

In terms of assembly, component of the 19S regulatory cap of the 26S proteasome. Interacts with PSMD14/RPN11. Interacts with, and reduces EEF1A1.

The protein localises to the cytoplasm. The protein resides in the nucleus. Active thioredoxin with a redox potential of about -250 mV. This Rattus norvegicus (Rat) protein is Thioredoxin-like protein 1 (Txnl1).